The chain runs to 411 residues: Serine--tRNA ligase (411 aa).

L-serine is bound at residue 226–228; that stretch reads TSE. 257–259 lines the ATP pocket; the sequence is RKE. An L-serine-binding site is contributed by glutamate 280. 344 to 347 lines the ATP pocket; the sequence is EISS. Serine 379 is a binding site for L-serine.

Belongs to the class-II aminoacyl-tRNA synthetase family. Type-1 seryl-tRNA synthetase subfamily. As to quaternary structure, homodimer. The tRNA molecule binds across the dimer.

The protein resides in the cytoplasm. The enzyme catalyses tRNA(Ser) + L-serine + ATP = L-seryl-tRNA(Ser) + AMP + diphosphate + H(+). The catalysed reaction is tRNA(Sec) + L-serine + ATP = L-seryl-tRNA(Sec) + AMP + diphosphate + H(+). The protein operates within aminoacyl-tRNA biosynthesis; selenocysteinyl-tRNA(Sec) biosynthesis; L-seryl-tRNA(Sec) from L-serine and tRNA(Sec): step 1/1. Catalyzes the attachment of serine to tRNA(Ser). Is also able to aminoacylate tRNA(Sec) with serine, to form the misacylated tRNA L-seryl-tRNA(Sec), which will be further converted into selenocysteinyl-tRNA(Sec). The protein is Serine--tRNA ligase of Campylobacter jejuni (strain RM1221).